The primary structure comprises 355 residues: UDP-N-acetylglucosamine--N-acetylmuramyl-(pentapeptide) pyrophosphoryl-undecaprenol N-acetylglucosamine transferase (355 aa).

Residues 15 to 17 (TGG), Asn127, Arg163, Ser191, Ile244, 263 to 268 (ALTVSE), and Gln288 contribute to the UDP-N-acetyl-alpha-D-glucosamine site.

This sequence belongs to the glycosyltransferase 28 family. MurG subfamily.

The protein resides in the cell inner membrane. The enzyme catalyses di-trans,octa-cis-undecaprenyl diphospho-N-acetyl-alpha-D-muramoyl-L-alanyl-D-glutamyl-meso-2,6-diaminopimeloyl-D-alanyl-D-alanine + UDP-N-acetyl-alpha-D-glucosamine = di-trans,octa-cis-undecaprenyl diphospho-[N-acetyl-alpha-D-glucosaminyl-(1-&gt;4)]-N-acetyl-alpha-D-muramoyl-L-alanyl-D-glutamyl-meso-2,6-diaminopimeloyl-D-alanyl-D-alanine + UDP + H(+). The protein operates within cell wall biogenesis; peptidoglycan biosynthesis. Cell wall formation. Catalyzes the transfer of a GlcNAc subunit on undecaprenyl-pyrophosphoryl-MurNAc-pentapeptide (lipid intermediate I) to form undecaprenyl-pyrophosphoryl-MurNAc-(pentapeptide)GlcNAc (lipid intermediate II). The protein is UDP-N-acetylglucosamine--N-acetylmuramyl-(pentapeptide) pyrophosphoryl-undecaprenol N-acetylglucosamine transferase of Salmonella typhi.